Reading from the N-terminus, the 290-residue chain is MYG1 protein CPn_0489/CP_0265/CPj0489/CpB0509 (290 aa).

The protein belongs to the MYG1 family.

This chain is MYG1 protein CPn_0489/CP_0265/CPj0489/CpB0509, found in Chlamydia pneumoniae (Chlamydophila pneumoniae).